Reading from the N-terminus, the 1594-residue chain is Calpain-D (1594 aa).

2 RanBP2-type zinc fingers span residues 1-35 and 135-164; these read MGTI…VRKV and LNRR…VSYL. Disordered stretches follow at residues 210 to 256, 371 to 400, 420 to 459, 524 to 543, and 554 to 606; these read EEQH…TAID, EPQQ…NPTQ, ASSS…SSSG, KKKQ…GSGE, and AGLG…RLSG. Positions 215–229 are enriched in basic residues; sequence HQLHSQHLHKRHLKG. 2 stretches are compositionally biased toward polar residues: residues 246 to 255 and 371 to 385; these read RRTQSLSTAI and EPQQ…QLQR. Residue S250 is modified to Phosphoserine. Residues 438–459 are compositionally biased toward low complexity; sequence NSNSNSSGNSNIINNNSSSSSG. The span at 528-541 shows a compositional bias: polar residues; it reads QIASESQTNNNTGS. A RanBP2-type 3 zinc finger spans residues 643 to 673; sequence RSKMWICIKCSYAYNRLWLQTCEMCEAKAEQ. A disordered region spans residues 684–703; sequence QQQQQQHHHHHLQQQQAEAP. RanBP2-type zinc fingers lie at residues 704–733 and 744–774; these read RDEP…SKLK and RKGE…HRQP. Disordered regions lie at residues 786–811 and 860–884; these read RPDG…HQSG and SLQQ…GSIV. Residues 860–871 are compositionally biased toward polar residues; it reads SLQQQRNSSSSG. The RanBP2-type 6 zinc finger occupies 927–956; the sequence is STKKWQCPACTYDNCAASVVCDICSSPRGL. Positions 1014–1321 constitute a Calpain catalytic domain; the sequence is LFVDDSFPPA…FDCIDICKVR (308 aa). Residues C1079, H1245, and N1265 contribute to the active site.

It belongs to the peptidase C2 family.

Its function is as follows. Has a role in eye development. Calcium-regulated non-lysosomal thiol-protease. This chain is Calpain-D (sol), found in Drosophila melanogaster (Fruit fly).